The following is a 191-amino-acid chain: Molybdenum cofactor guanylyltransferase (191 aa).

Residues L13–G15, K26, D72, and D102 contribute to the GTP site. D102 lines the Mg(2+) pocket.

The protein belongs to the MobA family. As to quaternary structure, monomer. Mg(2+) is required as a cofactor.

The protein resides in the cytoplasm. The enzyme catalyses Mo-molybdopterin + GTP + H(+) = Mo-molybdopterin guanine dinucleotide + diphosphate. Its function is as follows. Transfers a GMP moiety from GTP to Mo-molybdopterin (Mo-MPT) cofactor (Moco or molybdenum cofactor) to form Mo-molybdopterin guanine dinucleotide (Mo-MGD) cofactor. The chain is Molybdenum cofactor guanylyltransferase from Pseudomonas putida (strain ATCC 47054 / DSM 6125 / CFBP 8728 / NCIMB 11950 / KT2440).